Here is a 251-residue protein sequence, read N- to C-terminus: Segregation and condensation protein A (251 aa).

The protein belongs to the ScpA family. In terms of assembly, component of a cohesin-like complex composed of ScpA, ScpB and the Smc homodimer, in which ScpA and ScpB bind to the head domain of Smc. The presence of the three proteins is required for the association of the complex with DNA.

The protein localises to the cytoplasm. Participates in chromosomal partition during cell division. May act via the formation of a condensin-like complex containing Smc and ScpB that pull DNA away from mid-cell into both cell halves. The protein is Segregation and condensation protein A of Bacillus licheniformis (strain ATCC 14580 / DSM 13 / JCM 2505 / CCUG 7422 / NBRC 12200 / NCIMB 9375 / NCTC 10341 / NRRL NRS-1264 / Gibson 46).